The chain runs to 492 residues: Glutamyl-tRNA(Gln) amidotransferase subunit A (492 aa).

Residues Lys-78 and Ser-158 each act as charge relay system in the active site. Ser-182 functions as the Acyl-ester intermediate in the catalytic mechanism.

Belongs to the amidase family. GatA subfamily. As to quaternary structure, heterotrimer of A, B and C subunits.

It catalyses the reaction L-glutamyl-tRNA(Gln) + L-glutamine + ATP + H2O = L-glutaminyl-tRNA(Gln) + L-glutamate + ADP + phosphate + H(+). In terms of biological role, allows the formation of correctly charged Gln-tRNA(Gln) through the transamidation of misacylated Glu-tRNA(Gln) in organisms which lack glutaminyl-tRNA synthetase. The reaction takes place in the presence of glutamine and ATP through an activated gamma-phospho-Glu-tRNA(Gln). The polypeptide is Glutamyl-tRNA(Gln) amidotransferase subunit A (Orientia tsutsugamushi (strain Boryong) (Rickettsia tsutsugamushi)).